The sequence spans 247 residues: Carboxy-S-adenosyl-L-methionine synthase (247 aa).

S-adenosyl-L-methionine is bound by residues Y40, 65–67 (GAS), 90–91 (DN), 122–123 (DI), N137, and R204.

Belongs to the class I-like SAM-binding methyltransferase superfamily. Cx-SAM synthase family. As to quaternary structure, homodimer.

The enzyme catalyses prephenate + S-adenosyl-L-methionine = carboxy-S-adenosyl-L-methionine + 3-phenylpyruvate + H2O. In terms of biological role, catalyzes the conversion of S-adenosyl-L-methionine (SAM) to carboxy-S-adenosyl-L-methionine (Cx-SAM). This chain is Carboxy-S-adenosyl-L-methionine synthase, found in Pseudomonas entomophila (strain L48).